The primary structure comprises 785 residues: Hyperosmolality-gated Ca2+ permeable channel 1.7 (785 aa).

Residues 7–27 form a helical membrane-spanning segment; that stretch reads IGLSAAINLLSAFAFLFAFAM. Position 54 is a phosphoserine (serine 54). 9 consecutive transmembrane segments (helical) span residues 101 to 121, 156 to 176, 373 to 393, 425 to 445, 465 to 485, 510 to 530, 582 to 602, 628 to 648, and 651 to 671; these read IYLL…GVLV, FWAH…ILYM, LLTT…IAFV, FLPG…LMTM, YFWF…TAFQ, ATFF…AEIL, AVAP…YVVF, LIIC…TKKF, and VTAL…YCAG. The disordered stretch occupies residues 725-761; sequence VDEEESNPLVRTKRTSQGTTRYNSEASSSATTTPVAN. Residues 739 to 761 are compositionally biased toward polar residues; that stretch reads TSQGTTRYNSEASSSATTTPVAN.

This sequence belongs to the CSC1 (TC 1.A.17) family. Phosphorylated and activated by BIK1.

It localises to the membrane. It carries out the reaction Ca(2+)(in) = Ca(2+)(out). Functionally, calcium-permeable channel involved in plant stomatal immunity. The protein is Hyperosmolality-gated Ca2+ permeable channel 1.7 of Arabidopsis thaliana (Mouse-ear cress).